The chain runs to 1500 residues: Rho GTPase-activating protein 35 (1500 aa).

The tract at residues 1–266 is has GTPase activity, required for proper localization; that stretch reads MMMARKQDVR…IPYFEALKQQ (266 aa). Residues lysine 28, 33–37, leucine 52, serine 56, 95–97, 201–203, and 229–231 contribute to the GTP site; these read IGKSC, EQT, KCD, and SAR. FF domains lie at 270-327, 368-422, 429-483, and 485-550; these read IATA…HIHR, KLLE…HLEK, RAEM…HQKQ, and IDKA…HIHF. Tyrosine 308 is modified (phosphotyrosine). Serine 589 carries the post-translational modification Phosphoserine. The pG1 pseudoGTPase domain maps to 592–767; the sequence is DPNIDRINLV…LLDSKRNLNL (176 aa). 2 positions are modified to phosphoserine: serine 770 and serine 773. The region spanning 783 to 947 is the pG2 pseudoGTPase domain; sequence RIVMCLMCGD…FKDVVDKKNI (165 aa). 5 positions are modified to phosphoserine: serine 970, serine 975, serine 985, serine 1002, and serine 1073. A disordered region spans residues 970–989; sequence SPRAGSPLCNSNLQDSEEDI. Positions 1058 to 1090 are disordered; the sequence is SYLDQGHRDGQRKSVSSSTWLPPDGFDPSDYAE. Residue tyrosine 1088 is modified to Phosphotyrosine. Phosphotyrosine; by ABL2 and PTK6 is present on tyrosine 1106. Residues 1125–1142 are compositionally biased toward polar residues; that stretch reads KAQSNGSGNGSDSEMDTS. Residues 1125 to 1147 are disordered; that stretch reads KAQSNGSGNGSDSEMDTSSLERG. 6 positions are modified to phosphoserine: serine 1135, serine 1143, serine 1151, serine 1177, serine 1180, and serine 1222. Residues 1178-1208 form a disordered region; sequence VGSDDELGPIRKKEEDQASQGYKGDNAVIPY. The segment at 1214–1237 is required for phospholipid binding and regulation of the substrate preference; that stretch reads PRRRNILRSLRRNTKKPKPKPRPS. Threonine 1227 is modified (phosphothreonine). Serine 1237 carries the phosphoserine modification. The region spanning 1250–1437 is the Rho-GAP domain; the sequence is VPLTTVVTPE…LFIQQCPFFF (188 aa). The segment at 1444–1500 is disordered; sequence EPPGATPSSPSAVASTVPFLTSTPVTSQPSPPQSPPPTPQSPMQALLPSQLQAEHTL. A compositionally biased stretch (low complexity) spans 1449 to 1471; the sequence is TPSSPSAVASTVPFLTSTPVTSQ. The span at 1472 to 1483 shows a compositional bias: pro residues; it reads PSPPQSPPPTPQ. A phosphoserine mark is found at serine 1473 and serine 1477. Residue threonine 1481 is modified to Phosphothreonine. Residue serine 1484 is modified to Phosphoserine. Over residues 1490–1500 the composition is skewed to polar residues; sequence LPSQLQAEHTL.

In terms of assembly, interacts with RASA1. Interacts with the general transcription factor GTF2I, the interaction sequesters GTF2I in the cytoplasm. In terms of processing, phosphorylation of Tyr-1106 by PTK6 promotes the association with RASA1, inactivating RHOA while activating RAS. Phosphorylation at Tyr-308 by PDGFRA inhibits binding to GTF2I. Phosphorylated by PRKCA at Ser-1222 and Thr-1227, induces relocalization from the cytoplasm to regions of plasma membrane ruffling and prevents the binding and substrate specificity regulation by phospholipids. In brain, phosphorylated by FYN and SRC. During focal adhesion formation, phosphorylated by MAPK1 and MAPK3 at the C-terminal region, probably at Ser-1452, Ser-1477, Thr-1481 and Ser-1484. Phosphorylation by MAPK1 and MAPK3 inhibits GAP function and localizes ARGHAP35 away from newly forming focal adhesions and stress fibers in cells spreading on fibronectin. Phosphorylation at Ser-1477 and Thr-1481 by GSK3B requires priming by MAPK and inhibits RhoGAP activity and modulates polarized cell migration. In terms of tissue distribution, strongly expressed in retina (photoreceptor layer) and brain. Expression is maximal in the occipital, frontal, temporal lobe and also the cerebellum. Medium expression in the medulla and also in kidney, lung, liver, heart and spleen.

The protein resides in the cytoplasm. The protein localises to the cytoskeleton. It is found in the cilium basal body. Its subcellular location is the nucleus. It localises to the cell membrane. In terms of biological role, rho GTPase-activating protein (GAP). Binds several acidic phospholipids which inhibits the Rho GAP activity to promote the Rac GAP activity. This binding is inhibited by phosphorylation by PRKCA. Involved in cell differentiation as well as cell adhesion and migration, plays an important role in retinal tissue morphogenesis, neural tube fusion, midline fusion of the cerebral hemispheres and mammary gland branching morphogenesis. Transduces signals from p21-ras to the nucleus, acting via the ras GTPase-activating protein (GAP). Transduces SRC-dependent signals from cell-surface adhesion molecules, such as laminin, to promote neurite outgrowth. Regulates axon outgrowth, guidance and fasciculation. Modulates Rho GTPase-dependent F-actin polymerization, organization and assembly, is involved in polarized cell migration and in the positive regulation of ciliogenesis and cilia elongation. During mammary gland development, is required in both the epithelial and stromal compartments for ductal outgrowth. Represses transcription of the glucocorticoid receptor by binding to the cis-acting regulatory sequence 5'-GAGAAAAGAAACTGGAGAAACTC-3'; this function is however unclear and would need additional experimental evidences. In Canis lupus familiaris (Dog), this protein is Rho GTPase-activating protein 35.